The following is a 371-amino-acid chain: Transcription termination/antitermination protein NusA (371 aa).

One can recognise an S1 motif domain in the interval glutamate 135 to threonine 199. The 67-residue stretch at glutamate 301 to alanine 367 folds into the KH domain. A disordered region spans residues glycine 347–glutamate 371. Positions leucine 353 to glutamate 371 are enriched in acidic residues.

It belongs to the NusA family. Monomer. Binds directly to the core enzyme of the DNA-dependent RNA polymerase and to nascent RNA.

It is found in the cytoplasm. Functionally, participates in both transcription termination and antitermination. This chain is Transcription termination/antitermination protein NusA, found in Bacillus subtilis (strain 168).